The following is a 779-amino-acid chain: Phosphoribosylformylglycinamidine synthase subunit PurL (779 aa).

Residue histidine 52 is part of the active site. Positions 55 and 94 each coordinate ATP. Glutamate 96 contacts Mg(2+). Residues 97-100 (SHNH) and arginine 119 contribute to the substrate site. Catalysis depends on histidine 98, which acts as the Proton acceptor. Aspartate 120 serves as a coordination point for Mg(2+). A substrate-binding site is contributed by glutamine 243. Aspartate 271 contributes to the Mg(2+) binding site. 315–317 (ESQ) provides a ligand contact to substrate. Asparagine 523 and glycine 560 together coordinate ATP. Asparagine 561 contacts Mg(2+). A substrate-binding site is contributed by serine 563.

The protein belongs to the FGAMS family. As to quaternary structure, monomer. Part of the FGAM synthase complex composed of 1 PurL, 1 PurQ and 2 PurS subunits.

The protein resides in the cytoplasm. The catalysed reaction is N(2)-formyl-N(1)-(5-phospho-beta-D-ribosyl)glycinamide + L-glutamine + ATP + H2O = 2-formamido-N(1)-(5-O-phospho-beta-D-ribosyl)acetamidine + L-glutamate + ADP + phosphate + H(+). Its pathway is purine metabolism; IMP biosynthesis via de novo pathway; 5-amino-1-(5-phospho-D-ribosyl)imidazole from N(2)-formyl-N(1)-(5-phospho-D-ribosyl)glycinamide: step 1/2. Its function is as follows. Part of the phosphoribosylformylglycinamidine synthase complex involved in the purines biosynthetic pathway. Catalyzes the ATP-dependent conversion of formylglycinamide ribonucleotide (FGAR) and glutamine to yield formylglycinamidine ribonucleotide (FGAM) and glutamate. The FGAM synthase complex is composed of three subunits. PurQ produces an ammonia molecule by converting glutamine to glutamate. PurL transfers the ammonia molecule to FGAR to form FGAM in an ATP-dependent manner. PurS interacts with PurQ and PurL and is thought to assist in the transfer of the ammonia molecule from PurQ to PurL. This Prochlorococcus marinus subsp. pastoris (strain CCMP1986 / NIES-2087 / MED4) protein is Phosphoribosylformylglycinamidine synthase subunit PurL.